The primary structure comprises 232 residues: Large ribosomal subunit protein uL1 (232 aa).

Belongs to the universal ribosomal protein uL1 family. In terms of assembly, part of the 50S ribosomal subunit.

Binds directly to 23S rRNA. The L1 stalk is quite mobile in the ribosome, and is involved in E site tRNA release. Functionally, protein L1 is also a translational repressor protein, it controls the translation of the L11 operon by binding to its mRNA. This chain is Large ribosomal subunit protein uL1, found in Amoebophilus asiaticus (strain 5a2).